A 93-amino-acid chain; its full sequence is MTQSPNVKTFDALFAELSERARTRPAGSGTVAALDGGVHGIGKKILEEAGEVWLAAEHESDEALAEEISQLLYWTQVLMLSRGLSLDDVYGKL.

The protein belongs to the PRA-PH family.

The protein resides in the cytoplasm. It catalyses the reaction 1-(5-phospho-beta-D-ribosyl)-ATP + H2O = 1-(5-phospho-beta-D-ribosyl)-5'-AMP + diphosphate + H(+). It functions in the pathway amino-acid biosynthesis; L-histidine biosynthesis; L-histidine from 5-phospho-alpha-D-ribose 1-diphosphate: step 2/9. This Mycolicibacterium vanbaalenii (strain DSM 7251 / JCM 13017 / BCRC 16820 / KCTC 9966 / NRRL B-24157 / PYR-1) (Mycobacterium vanbaalenii) protein is Phosphoribosyl-ATP pyrophosphatase.